Here is a 69-residue protein sequence, read N- to C-terminus: MSESQLKKVLKENETLKAQLEKSTTILKVSEACESLQDYCTKTSDPFIPGWSGENEWTKPLKGNGCSVL.

Serine 2 is modified (N-acetylserine). A Cysteine methyl ester modification is found at cysteine 66. A lipid anchor (S-geranylgeranyl cysteine) is attached at cysteine 66. Residues 67 to 69 constitute a propeptide, removed in mature form; sequence SVL.

Belongs to the G protein gamma family. G proteins are composed of 3 units, alpha, beta and gamma. Interacts with gpbA, and this requires phlp1. Post-translationally, this protein is thought to be subject to lipidation, and this requires phlp1.

It localises to the cell membrane. Functionally, guanine nucleotide-binding proteins (G proteins) are involved as a modulator or transducer in various transmembrane signaling systems. This major G-protein of the squid photoreceptor is involved in visual transduction. The beta and gamma chains are required for the GTPase activity, for replacement of GDP by GTP, and for G protein-effector interaction. Required for normal chemotaxis in response to cAMP. The protein is Guanine nucleotide-binding protein subunit gamma (gpgA) of Dictyostelium discoideum (Social amoeba).